We begin with the raw amino-acid sequence, 342 residues long: S-adenosylmethionine:tRNA ribosyltransferase-isomerase (342 aa).

It belongs to the QueA family. Monomer.

The protein resides in the cytoplasm. The catalysed reaction is 7-aminomethyl-7-carbaguanosine(34) in tRNA + S-adenosyl-L-methionine = epoxyqueuosine(34) in tRNA + adenine + L-methionine + 2 H(+). It functions in the pathway tRNA modification; tRNA-queuosine biosynthesis. Transfers and isomerizes the ribose moiety from AdoMet to the 7-aminomethyl group of 7-deazaguanine (preQ1-tRNA) to give epoxyqueuosine (oQ-tRNA). The chain is S-adenosylmethionine:tRNA ribosyltransferase-isomerase from Listeria welshimeri serovar 6b (strain ATCC 35897 / DSM 20650 / CCUG 15529 / CIP 8149 / NCTC 11857 / SLCC 5334 / V8).